Consider the following 210-residue polypeptide: 2,3-bisphosphoglycerate-dependent phosphoglycerate mutase (210 aa).

Substrate contacts are provided by residues 9-16, 22-23, Arg-61, 88-91, Lys-99, 115-116, and 159-160; these read RHGQSEWN, TG, ERDY, RR, and GN. The active-site Tele-phosphohistidine intermediate is His-10. The active-site Proton donor/acceptor is the Glu-88.

The protein belongs to the phosphoglycerate mutase family. BPG-dependent PGAM subfamily. Homodimer.

It carries out the reaction (2R)-2-phosphoglycerate = (2R)-3-phosphoglycerate. Its pathway is carbohydrate degradation; glycolysis; pyruvate from D-glyceraldehyde 3-phosphate: step 3/5. In terms of biological role, catalyzes the interconversion of 2-phosphoglycerate and 3-phosphoglycerate. The chain is 2,3-bisphosphoglycerate-dependent phosphoglycerate mutase from Parvibaculum lavamentivorans (strain DS-1 / DSM 13023 / NCIMB 13966).